We begin with the raw amino-acid sequence, 224 residues long: ATP-dependent dethiobiotin synthetase BioD (224 aa).

Position 12–17 (12–17) interacts with ATP; it reads EVGKTV. Thr-16 is a Mg(2+) binding site. The active site involves Lys-34. Thr-38 provides a ligand contact to substrate. ATP-binding positions include Asp-47, 106-109, 166-167, and 196-198; these read EGAG, GS, and PEG. Residues Asp-47 and Glu-106 each coordinate Mg(2+).

Belongs to the dethiobiotin synthetase family. Homodimer. Mg(2+) is required as a cofactor.

The protein localises to the cytoplasm. The enzyme catalyses (7R,8S)-7,8-diammoniononanoate + CO2 + ATP = (4R,5S)-dethiobiotin + ADP + phosphate + 3 H(+). It functions in the pathway cofactor biosynthesis; biotin biosynthesis; biotin from 7,8-diaminononanoate: step 1/2. Its function is as follows. Catalyzes a mechanistically unusual reaction, the ATP-dependent insertion of CO2 between the N7 and N8 nitrogen atoms of 7,8-diaminopelargonic acid (DAPA, also called 7,8-diammoniononanoate) to form a ureido ring. In Saccharopolyspora erythraea (strain ATCC 11635 / DSM 40517 / JCM 4748 / NBRC 13426 / NCIMB 8594 / NRRL 2338), this protein is ATP-dependent dethiobiotin synthetase BioD.